Reading from the N-terminus, the 877-residue chain is Phosphoenolpyruvate carboxylase (877 aa).

Catalysis depends on residues His138 and Lys543.

This sequence belongs to the PEPCase type 1 family. The cofactor is Mg(2+).

It carries out the reaction oxaloacetate + phosphate = phosphoenolpyruvate + hydrogencarbonate. Forms oxaloacetate, a four-carbon dicarboxylic acid source for the tricarboxylic acid cycle. This Aeromonas hydrophila subsp. hydrophila (strain ATCC 7966 / DSM 30187 / BCRC 13018 / CCUG 14551 / JCM 1027 / KCTC 2358 / NCIMB 9240 / NCTC 8049) protein is Phosphoenolpyruvate carboxylase.